The primary structure comprises 380 residues: 1-deoxy-D-xylulose 5-phosphate reductoisomerase (380 aa).

8 residues coordinate NADPH: threonine 10, glycine 11, serine 12, isoleucine 13, glycine 35, arginine 36, asparagine 37, and asparagine 121. Lysine 122 serves as a coordination point for 1-deoxy-D-xylulose 5-phosphate. Residue glutamate 123 coordinates NADPH. Aspartate 147 serves as a coordination point for Mn(2+). The 1-deoxy-D-xylulose 5-phosphate site is built by serine 148, glutamate 149, serine 173, and histidine 196. Residue glutamate 149 participates in Mn(2+) binding. Glycine 202 contributes to the NADPH binding site. 1-deoxy-D-xylulose 5-phosphate contacts are provided by serine 209, asparagine 214, lysine 215, and glutamate 218. Glutamate 218 contacts Mn(2+).

It belongs to the DXR family. The cofactor is Mg(2+). Mn(2+) is required as a cofactor.

It carries out the reaction 2-C-methyl-D-erythritol 4-phosphate + NADP(+) = 1-deoxy-D-xylulose 5-phosphate + NADPH + H(+). The protein operates within isoprenoid biosynthesis; isopentenyl diphosphate biosynthesis via DXP pathway; isopentenyl diphosphate from 1-deoxy-D-xylulose 5-phosphate: step 1/6. In terms of biological role, catalyzes the NADPH-dependent rearrangement and reduction of 1-deoxy-D-xylulose-5-phosphate (DXP) to 2-C-methyl-D-erythritol 4-phosphate (MEP). This is 1-deoxy-D-xylulose 5-phosphate reductoisomerase from Agathobacter rectalis (strain ATCC 33656 / DSM 3377 / JCM 17463 / KCTC 5835 / VPI 0990) (Eubacterium rectale).